Consider the following 128-residue polypeptide: Glycine cleavage system H protein 2 (128 aa).

Residues 24–105 (TVTVGISDHA…PYSAWIFKVK (82 aa)) enclose the Lipoyl-binding domain. Residue lysine 65 is modified to N6-lipoyllysine.

It belongs to the GcvH family. The glycine cleavage system is composed of four proteins: P, T, L and H. (R)-lipoate serves as cofactor.

Its function is as follows. The glycine cleavage system catalyzes the degradation of glycine. The H protein shuttles the methylamine group of glycine from the P protein to the T protein. This Pseudomonas syringae pv. tomato (strain ATCC BAA-871 / DC3000) protein is Glycine cleavage system H protein 2.